The primary structure comprises 116 residues: Putative pterin-4-alpha-carbinolamine dehydratase (116 aa).

It belongs to the pterin-4-alpha-carbinolamine dehydratase family.

It carries out the reaction (4aS,6R)-4a-hydroxy-L-erythro-5,6,7,8-tetrahydrobiopterin = (6R)-L-erythro-6,7-dihydrobiopterin + H2O. This is Putative pterin-4-alpha-carbinolamine dehydratase from Microcystis aeruginosa (strain NIES-843 / IAM M-2473).